A 100-amino-acid chain; its full sequence is UPF0473 protein Csac_1599 (100 aa).

The protein belongs to the UPF0473 family.

In Caldicellulosiruptor saccharolyticus (strain ATCC 43494 / DSM 8903 / Tp8T 6331), this protein is UPF0473 protein Csac_1599.